The chain runs to 147 residues: Hemoglobin subunit epsilon (147 aa).

In terms of domain architecture, Globin spans 3–147; it reads HFTAEEKAAI…VAIALGHKYH (145 aa). 2 positions are modified to phosphoserine: Ser14 and Ser51. Residues His64 and His93 each contribute to the heme b site.

This sequence belongs to the globin family. In terms of assembly, heterotetramer of two alpha chains and two epsilon chains in early embryonic hemoglobin Gower-2; two zeta chains and two epsilon chains in early embryonic hemoglobin Gower-1. Red blood cells.

Its function is as follows. The epsilon chain is a beta-type chain of early mammalian embryonic hemoglobin. The polypeptide is Hemoglobin subunit epsilon (HBE1) (Alouatta belzebul (Red-handed howler monkey)).